The chain runs to 427 residues: Serine hydroxymethyltransferase (427 aa).

A (6S)-5,6,7,8-tetrahydrofolate-binding site is contributed by 120 to 122 (GHI). Lysine 226 is subject to N6-(pyridoxal phosphate)lysine. (6S)-5,6,7,8-tetrahydrofolate is bound at residue glutamate 243.

Belongs to the SHMT family. Homodimer. Pyridoxal 5'-phosphate is required as a cofactor.

It localises to the cytoplasm. Its pathway is amino-acid biosynthesis; glycine biosynthesis; glycine from L-serine: step 1/1. In terms of biological role, catalyzes the reversible interconversion of serine and glycine with a modified folate serving as the one-carbon carrier. Also exhibits a pteridine-independent aldolase activity toward beta-hydroxyamino acids, producing glycine and aldehydes, via a retro-aldol mechanism. This is Serine hydroxymethyltransferase from Thermococcus gammatolerans (strain DSM 15229 / JCM 11827 / EJ3).